We begin with the raw amino-acid sequence, 376 residues long: Chaperone protein DnaJ (376 aa).

The J domain maps to 4–68; that stretch reads DYYQLLGVAR…ETRARYDQFG (65 aa). The segment at 135–217 adopts a CR-type zinc-finger fold; sequence GGEKEIRVTH…CGGAGRLRRP (83 aa). The Zn(2+) site is built by Cys-148, Cys-151, Cys-165, Cys-168, Cys-191, Cys-194, Cys-205, and Cys-208. CXXCXGXG motif repeat units lie at residues 148 to 155, 165 to 172, 191 to 198, and 205 to 212; these read CGTCQGSG, CTTCGGAG, CPTCEGSG, and CDDCGGAG.

Belongs to the DnaJ family. In terms of assembly, homodimer. Zn(2+) serves as cofactor.

The protein localises to the cytoplasm. In terms of biological role, participates actively in the response to hyperosmotic and heat shock by preventing the aggregation of stress-denatured proteins and by disaggregating proteins, also in an autonomous, DnaK-independent fashion. Unfolded proteins bind initially to DnaJ; upon interaction with the DnaJ-bound protein, DnaK hydrolyzes its bound ATP, resulting in the formation of a stable complex. GrpE releases ADP from DnaK; ATP binding to DnaK triggers the release of the substrate protein, thus completing the reaction cycle. Several rounds of ATP-dependent interactions between DnaJ, DnaK and GrpE are required for fully efficient folding. Also involved, together with DnaK and GrpE, in the DNA replication of plasmids through activation of initiation proteins. This Synechococcus sp. (strain ATCC 27144 / PCC 6301 / SAUG 1402/1) (Anacystis nidulans) protein is Chaperone protein DnaJ.